The chain runs to 273 residues: Putative phosphoenolpyruvate synthase regulatory protein (273 aa).

Residue 153–160 (GVSRSGKT) coordinates ADP.

It belongs to the pyruvate, phosphate/water dikinase regulatory protein family. PSRP subfamily.

The catalysed reaction is [pyruvate, water dikinase] + ADP = [pyruvate, water dikinase]-phosphate + AMP + H(+). The enzyme catalyses [pyruvate, water dikinase]-phosphate + phosphate + H(+) = [pyruvate, water dikinase] + diphosphate. In terms of biological role, bifunctional serine/threonine kinase and phosphorylase involved in the regulation of the phosphoenolpyruvate synthase (PEPS) by catalyzing its phosphorylation/dephosphorylation. This Delftia acidovorans (strain DSM 14801 / SPH-1) protein is Putative phosphoenolpyruvate synthase regulatory protein.